Here is a 553-residue protein sequence, read N- to C-terminus: Membrane protein insertase YidC (553 aa).

A helical membrane pass occupies residues 6-26 (LIALVLSLLVLVFWEMYFGLF). The segment at 34–59 (NKTEQAAPTTTQPATPQTVPPQAATP) is disordered. Residues 38-59 (QAAPTTTQPATPQTVPPQAATP) are compositionally biased toward low complexity. A run of 5 helical transmembrane segments spans residues 331–351 (LASA…VYVL), 360–380 (NWGV…WPLT), 424–444 (VNPM…FALY), 477–497 (IPYL…MFIQ), and 512–532 (IMMI…SGLV).

Belongs to the OXA1/ALB3/YidC family. Type 1 subfamily. Interacts with the Sec translocase complex via SecD. Specifically interacts with transmembrane segments of nascent integral membrane proteins during membrane integration.

It is found in the cell inner membrane. Its function is as follows. Required for the insertion and/or proper folding and/or complex formation of integral membrane proteins into the membrane. Involved in integration of membrane proteins that insert both dependently and independently of the Sec translocase complex, as well as at least some lipoproteins. Aids folding of multispanning membrane proteins. This is Membrane protein insertase YidC from Syntrophobacter fumaroxidans (strain DSM 10017 / MPOB).